A 300-amino-acid polypeptide reads, in one-letter code: Vetispiradiene synthase 2 (300 aa).

Mg(2+) contacts are provided by aspartate 54, aspartate 58, aspartate 197, threonine 201, and glutamate 205. A DDXXD motif motif is present at residues 54-58; the sequence is DDTFD.

It belongs to the terpene synthase family. Tpsa subfamily. Mg(2+) serves as cofactor.

Its subcellular location is the cytoplasm. The catalysed reaction is (2E,6E)-farnesyl diphosphate = (-)-vetispiradiene + diphosphate. The protein operates within secondary metabolite biosynthesis; terpenoid biosynthesis. Its function is as follows. Sesquiterpene synthase that catalyzes the formation of vetispiradiene from trans,trans-farnesyl diphosphate. The initial internal cyclization produces the monocyclic intermediate germacrene A. This Hyoscyamus muticus (Egyptian henbane) protein is Vetispiradiene synthase 2.